Reading from the N-terminus, the 288-residue chain is Phytanoyl-CoA dioxygenase domain-containing protein 1 homolog (288 aa).

2-oxoglutarate-binding positions include lysine 95, methionine 134, 149-151 (HVD), and tryptophan 167. Fe cation contacts are provided by histidine 149 and aspartate 151. Histidine 242 serves as a coordination point for Fe cation. 2-oxoglutarate contacts are provided by serine 244 and arginine 253.

Belongs to the PhyH family. PHYHD1 subfamily. Fe cation serves as cofactor.

Its function is as follows. Has alpha-ketoglutarate-dependent dioxygenase activity. Does not show detectable activity towards fatty acid CoA thioesters. Is not expected to be active with phytanoyl CoA. The protein is Phytanoyl-CoA dioxygenase domain-containing protein 1 homolog of Caenorhabditis elegans.